The sequence spans 493 residues: Glutamate--tRNA ligase (493 aa).

The 'HIGH' region motif lies at 10 to 20; that stretch reads PSPTGDPHVGT. Residues 251–255 carry the 'KMSKS' region motif; the sequence is KLSKR. Lys254 is an ATP binding site.

Belongs to the class-I aminoacyl-tRNA synthetase family. Glutamate--tRNA ligase type 1 subfamily. Monomer.

Its subcellular location is the cytoplasm. The enzyme catalyses tRNA(Glu) + L-glutamate + ATP = L-glutamyl-tRNA(Glu) + AMP + diphosphate. In terms of biological role, catalyzes the attachment of glutamate to tRNA(Glu) in a two-step reaction: glutamate is first activated by ATP to form Glu-AMP and then transferred to the acceptor end of tRNA(Glu). This is Glutamate--tRNA ligase from Pseudomonas putida (strain W619).